Reading from the N-terminus, the 352-residue chain is 4-hydroxy-3-methylbut-2-en-1-yl diphosphate synthase (flavodoxin) (352 aa).

[4Fe-4S] cluster-binding residues include Cys-262, Cys-265, Cys-297, and Glu-304.

This sequence belongs to the IspG family. It depends on [4Fe-4S] cluster as a cofactor.

It catalyses the reaction (2E)-4-hydroxy-3-methylbut-2-enyl diphosphate + oxidized [flavodoxin] + H2O + 2 H(+) = 2-C-methyl-D-erythritol 2,4-cyclic diphosphate + reduced [flavodoxin]. It participates in isoprenoid biosynthesis; isopentenyl diphosphate biosynthesis via DXP pathway; isopentenyl diphosphate from 1-deoxy-D-xylulose 5-phosphate: step 5/6. Its function is as follows. Converts 2C-methyl-D-erythritol 2,4-cyclodiphosphate (ME-2,4cPP) into 1-hydroxy-2-methyl-2-(E)-butenyl 4-diphosphate. The protein is 4-hydroxy-3-methylbut-2-en-1-yl diphosphate synthase (flavodoxin) of Campylobacter concisus (strain 13826).